A 698-amino-acid chain; its full sequence is Macrophomene synthase (698 aa).

The segment at 21–340 (MEYMYSVPLD…SCDRYSSYRR (320 aa)) is terpene cyclase. Mg(2+) is bound at residue Asp-113. Residues 113 to 117 (DNIAE) carry the DDXXD 1 motif. Positions 242-250 (NDFFSFNYE) match the NSE/DTE motif. Positions 341-696 (EKHQMELPIR…IQLALERLRI (356 aa)) are prenyltransferase. Residues 368–387 (LPNGKQLDAPTESSGKDLSD) form a disordered region. 3 residues coordinate isopentenyl diphosphate: Lys-417, Arg-420, and His-449. Asp-456 and Asp-460 together coordinate Mg(2+). Positions 456-460 (DDIED) match the DDXXD 2 motif. Arg-465 serves as a coordination point for dimethylallyl diphosphate. Residue Arg-466 coordinates isopentenyl diphosphate. Residues Lys-543, Thr-544, Gln-579, Asn-586, Lys-596, and Lys-606 each contribute to the dimethylallyl diphosphate site.

It in the N-terminal section; belongs to the terpene synthase family. In the C-terminal section; belongs to the FPP/GGPP synthase family. In terms of assembly, hexamer. Mg(2+) is required as a cofactor.

The enzyme catalyses 5 isopentenyl diphosphate + dimethylallyl diphosphate = all-trans-hexaprenyl diphosphate + 5 diphosphate. It carries out the reaction all-trans-hexaprenyl diphosphate = macrophomene + diphosphate. Functionally, bifunctional terpene synthase that converts dimethylallyl diphosphate (DMAPP) and isopentenyl diphosphate (IPP) into macrophomene as a single product. The C-terminal prenyltransferase (PT) domain of MpMS catalyzes formation of hexaprenyl diphosphate (HexPP), whereas the N-terminal terpene cyclase (TC) domain catalyzes the cyclization of HexPP to macrophomene. The protein is Macrophomene synthase of Macrophomina phaseolina (strain MS6) (Charcoal rot fungus).